The sequence spans 175 residues: Myosin regulatory light chain 2, atrial isoform (175 aa).

Ala2 bears the N-acetylalanine mark. Phosphoserine is present on residues Ser22 and Ser23. EF-hand domains follow at residues 32 to 67 (AQIQ…LGKV), 102 to 137 (DPEE…QADK), and 138 to 173 (FSPA…GDEK). Positions 45, 47, 49, and 56 each coordinate Ca(2+).

Myosin is a hexamer of 2 heavy chains and 4 light chains.

The chain is Myosin regulatory light chain 2, atrial isoform (MYL7) from Sus scrofa (Pig).